The primary structure comprises 392 residues: HCLS1-binding protein 3 (392 aa).

Residue Met-1 is modified to N-acetylmethionine. Phosphoserine is present on residues Ser-3, Ser-139, and Ser-194. One can recognise a PX domain in the interval 19–142 (GLDLTVPQHQ…EFLGTRSPGA (124 aa)). Disordered stretches follow at residues 138 to 162 (RSPGAAGLTSRDSSVLDGTDSQTGN), 174 to 265 (DQVA…PLKL), and 319 to 364 (GAEP…KPQE). A compositionally biased stretch (acidic residues) spans 190 to 201 (DAEESLEEEEAL). Basic residues predominate over residues 208 to 220 (RSKKPKKHPKVAV). Ser-249 is subject to Phosphoserine. A compositionally biased stretch (pro residues) spans 325 to 335 (KPQLKPKPPVA). Residue Lys-337 is modified to N6-acetyllysine.

As to quaternary structure, binds HCLS1. Interacts with the SH3 domain of HCLS1 in vitro.

In terms of biological role, may be a modulator of IL-2 signaling. The sequence is that of HCLS1-binding protein 3 (HS1BP3) from Homo sapiens (Human).